Reading from the N-terminus, the 607-residue chain is DNA mismatch repair protein MutL (607 aa).

Belongs to the DNA mismatch repair MutL/HexB family.

In terms of biological role, this protein is involved in the repair of mismatches in DNA. It is required for dam-dependent methyl-directed DNA mismatch repair. May act as a 'molecular matchmaker', a protein that promotes the formation of a stable complex between two or more DNA-binding proteins in an ATP-dependent manner without itself being part of a final effector complex. The sequence is that of DNA mismatch repair protein MutL from Gemmatimonas aurantiaca (strain DSM 14586 / JCM 11422 / NBRC 100505 / T-27).